Here is a 121-residue protein sequence, read N- to C-terminus: Immunoglobulin kappa variable 2-40 (121 aa).

The signal sequence occupies residues Met1–Ser19. The Ig-like domain occupies Glu20–Pro121. Residues Asp21–Cys43 form a framework-1 region. Cysteines 43 and 114 form a disulfide. Positions Arg44–Asp60 are complementarity-determining-1. The segment at Trp61–Tyr75 is framework-2. Residues Thr76–Ser82 form a complementarity-determining-2 region. A framework-3 region spans residues Gly83–Cys114. The tract at residues Met115–Pro121 is complementarity-determining-3.

In terms of assembly, immunoglobulins are composed of two identical heavy chains and two identical light chains; disulfide-linked.

It is found in the secreted. The protein resides in the cell membrane. Its function is as follows. V region of the variable domain of immunoglobulin light chains that participates in the antigen recognition. Immunoglobulins, also known as antibodies, are membrane-bound or secreted glycoproteins produced by B lymphocytes. In the recognition phase of humoral immunity, the membrane-bound immunoglobulins serve as receptors which, upon binding of a specific antigen, trigger the clonal expansion and differentiation of B lymphocytes into immunoglobulins-secreting plasma cells. Secreted immunoglobulins mediate the effector phase of humoral immunity, which results in the elimination of bound antigens. The antigen binding site is formed by the variable domain of one heavy chain, together with that of its associated light chain. Thus, each immunoglobulin has two antigen binding sites with remarkable affinity for a particular antigen. The variable domains are assembled by a process called V-(D)-J rearrangement and can then be subjected to somatic hypermutations which, after exposure to antigen and selection, allow affinity maturation for a particular antigen. This chain is Immunoglobulin kappa variable 2-40, found in Homo sapiens (Human).